A 340-amino-acid chain; its full sequence is MAFMRSKPSLGSLARVAFRWCGPGVGLVNYSQEPYLVKAVQGKSKPRSPTLQSAMQPRAQAETIQAPKCFGEDSFFFSSTPKADVMGVADGVGGWRDRGIDAGRFSRDLMQRCFVHAQKPTFDGRNPRQLLSECYGEMKRKWKPILGSSTACVVAFNRSESALYTANLGDSGYVVIRNGSVLDRSEEQTHFFNMPFQLTVPPPDSNREMWFCDDPSEAVATRLLLQPDDLVLVATDGLFDNMPEQMLLEMLSKVQGVHEQKAIQEAVNRVVERAGALSINPIYKSPFCLRALENNVAYGGGGKPDDITVVLASVAMRQCNTVGDSNESKGSDLRPRLSFP.

Positions 58–314 constitute a PPM-type phosphatase domain; sequence RAQAETIQAP…DDITVVLASV (257 aa). 3 residues coordinate Mn(2+): D90, G91, and D236.

Belongs to the PP2C family. It depends on Mg(2+) as a cofactor. Requires Mn(2+) as cofactor.

The catalysed reaction is O-phospho-L-seryl-[protein] + H2O = L-seryl-[protein] + phosphate. It catalyses the reaction O-phospho-L-threonyl-[protein] + H2O = L-threonyl-[protein] + phosphate. The polypeptide is Protein phosphatase PTC7 homolog fig (Drosophila pseudoobscura pseudoobscura (Fruit fly)).